Consider the following 303-residue polypeptide: D-alanine--D-alanine ligase (303 aa).

One can recognise an ATP-grasp domain in the interval 99–293 (TYRFLKDIVE…FEELVEIILK (195 aa)). 125 to 176 (GYPCVVKPRREGSSIGVFICESDEEFQHALKEDLPRYGSVIVQKYIPGREMT) is an ATP binding site. Mg(2+) is bound by residues D248, E260, and N262.

This sequence belongs to the D-alanine--D-alanine ligase family. Mg(2+) is required as a cofactor. It depends on Mn(2+) as a cofactor.

The protein resides in the cytoplasm. The catalysed reaction is 2 D-alanine + ATP = D-alanyl-D-alanine + ADP + phosphate + H(+). Its pathway is cell wall biogenesis; peptidoglycan biosynthesis. Cell wall formation. The chain is D-alanine--D-alanine ligase from Thermotoga petrophila (strain ATCC BAA-488 / DSM 13995 / JCM 10881 / RKU-1).